Reading from the N-terminus, the 285-residue chain is MKILLFLCFLVSVAFAKPPTIQLKSNTKSQNGFIVGGTEAVDGDAPHQVSLQHTSHFCGGSIISERWILTAAHCIDADDLSNPGGMSVRYNTLNLKSGTLVKVKSIKVHEQYSNVTSDNDIALLETVASMNLNQTNAVAAKLPAKGNDPQDGDLFLSGWGTLHSGDTTIPTNLQKVTVPLTNRSVCAEAYTGIVNITENMFCAGKMGIGGVDSCQGDSGGGAMLNKELVGVVSFGVGCGDPKYPGVYTRVSQYLDWIELSAKSSATTLVAVNITLFLTLFIGAIW.

A signal peptide spans 1 to 16 (MKILLFLCFLVSVAFA). The propeptide occupies 17–33 (KPPTIQLKSNTKSQNGF). The region spanning 34 to 262 (IVGGTEAVDG…YLDWIELSAK (229 aa)) is the Peptidase S1 domain. A disulfide bond links cysteine 58 and cysteine 74. Residues histidine 73 and aspartate 120 each act as charge relay system in the active site. 2 cysteine pairs are disulfide-bonded: cysteine 186–cysteine 202 and cysteine 214–cysteine 238. The Charge relay system role is filled by serine 218.

This sequence belongs to the peptidase S1 family.

Its subcellular location is the secreted. It catalyses the reaction Preferential cleavage: Arg-|-Xaa, Lys-|-Xaa.. Inhibited by the serine protease inhibitor phenylmethylsulfonyl, and trypsin inhibitors soybean trypsin inhibitor and tosyllysine chloromethyl ketone. Not inhibited by dithiothreitol, a cysteine protease inhibitor. Digests TAMe (p-toluene arginine methyl ester), but not ethyl N-benzoyl-L-tyrosinate (BTEE). The chain is Trypsin Tyr p 3.0101 from Tyrophagus putrescentiae (Mold mite).